The following is a 319-amino-acid chain: Phenoxybenzoate dioxygenase subunit beta (319 aa).

The FAD-binding FR-type domain occupies 7–109 (MAPVSLRIHA…DGPSNHFALD (103 aa)). 113–223 (PHAVFIAGGI…PARVHLEYFA (111 aa)) provides a ligand contact to NAD(+). The 2Fe-2S ferredoxin-type domain occupies 234–319 (FVVHLARSGR…SKTAELTLDL (86 aa)). [2Fe-2S] cluster contacts are provided by Cys-268, Cys-273, Cys-276, and Cys-306.

Belongs to the PDR/VanB family. As to quaternary structure, this dioxygenase system consists of two proteins: the alpha subunit (PobA) and a subunit (PobB) that acts as a ferredoxin and a ferredoxin reductase. Requires FMN as cofactor.

It participates in aromatic compound metabolism; carboxydiphenyl ether degradation. In terms of biological role, degrades exclusively diarylether compounds having carboxyl groups in the 3- or 4-position. Yields a hemiacetal that spontaneously hydrolyzes to phenol and protocatechuate. This Ectopseudomonas oleovorans (Pseudomonas oleovorans) protein is Phenoxybenzoate dioxygenase subunit beta (pobB).